We begin with the raw amino-acid sequence, 552 residues long: Dihydroxy-acid dehydratase (552 aa).

Aspartate 78 provides a ligand contact to Mg(2+). Cysteine 119 is a binding site for [2Fe-2S] cluster. 2 residues coordinate Mg(2+): aspartate 120 and lysine 121. Residue lysine 121 is modified to N6-carboxylysine. Cysteine 191 contributes to the [2Fe-2S] cluster binding site. Residue glutamate 442 coordinates Mg(2+). Serine 468 acts as the Proton acceptor in catalysis.

This sequence belongs to the IlvD/Edd family. Homodimer. [2Fe-2S] cluster is required as a cofactor. Mg(2+) serves as cofactor.

It carries out the reaction (2R)-2,3-dihydroxy-3-methylbutanoate = 3-methyl-2-oxobutanoate + H2O. The catalysed reaction is (2R,3R)-2,3-dihydroxy-3-methylpentanoate = (S)-3-methyl-2-oxopentanoate + H2O. It participates in amino-acid biosynthesis; L-isoleucine biosynthesis; L-isoleucine from 2-oxobutanoate: step 3/4. It functions in the pathway amino-acid biosynthesis; L-valine biosynthesis; L-valine from pyruvate: step 3/4. Its function is as follows. Functions in the biosynthesis of branched-chain amino acids. Catalyzes the dehydration of (2R,3R)-2,3-dihydroxy-3-methylpentanoate (2,3-dihydroxy-3-methylvalerate) into 2-oxo-3-methylpentanoate (2-oxo-3-methylvalerate) and of (2R)-2,3-dihydroxy-3-methylbutanoate (2,3-dihydroxyisovalerate) into 2-oxo-3-methylbutanoate (2-oxoisovalerate), the penultimate precursor to L-isoleucine and L-valine, respectively. This Clostridium botulinum (strain Eklund 17B / Type B) protein is Dihydroxy-acid dehydratase.